The following is a 330-amino-acid chain: MYTEINEMLTPKVLKVQAESPYKARIVLEPLERGFGHTLGNALRRILLSSMPGSAITEASIDGVLHEYSTIEGVQEDVVDLLLNLKSVAIKLTVGNEAQVTLNKEGPCQVTAGDIQLTHGQEIINPELVIANLNEKGKLNMTLKVERGIGFHNTDAFVRYHDDEIEKKTVGKLKIDNSFSPVKKVAYFVDSARVENRTDLDKLTIELETNGTIDAEEAIRISASILQRQLHAFVDMKFEESRADNKERNDFDPVLLRSVDDLELTVRSANCLKAENIHYIGDLVQRTESELLKTPNLGKKSLTEIKDVLASRSLSLGMKLENWPPASLGE.

An alpha N-terminal domain (alpha-NTD) region spans residues 1–237 (MYTEINEMLT…RQLHAFVDMK (237 aa)). The tract at residues 251 to 330 (FDPVLLRSVD…ENWPPASLGE (80 aa)) is alpha C-terminal domain (alpha-CTD).

It belongs to the RNA polymerase alpha chain family. As to quaternary structure, homodimer. The RNAP catalytic core consists of 2 alpha, 1 beta, 1 beta' and 1 omega subunit. When a sigma factor is associated with the core the holoenzyme is formed, which can initiate transcription.

It catalyses the reaction RNA(n) + a ribonucleoside 5'-triphosphate = RNA(n+1) + diphosphate. In terms of biological role, DNA-dependent RNA polymerase catalyzes the transcription of DNA into RNA using the four ribonucleoside triphosphates as substrates. The polypeptide is DNA-directed RNA polymerase subunit alpha (Legionella pneumophila (strain Paris)).